The sequence spans 293 residues: Probable endonuclease 4 (293 aa).

The Zn(2+) site is built by H78, H118, E154, D188, H191, H225, D238, H240, and E270.

This sequence belongs to the AP endonuclease 2 family. Zn(2+) serves as cofactor.

It carries out the reaction Endonucleolytic cleavage to 5'-phosphooligonucleotide end-products.. Endonuclease IV plays a role in DNA repair. It cleaves phosphodiester bonds at apurinic or apyrimidinic (AP) sites, generating a 3'-hydroxyl group and a 5'-terminal sugar phosphate. This Vibrio vulnificus (strain YJ016) protein is Probable endonuclease 4.